The primary structure comprises 656 residues: Phosphatidylinositol 4,5-bisphosphate-binding protein SLM2 (656 aa).

A PH domain is found at 445 to 555 (FEVKSGFLEK…WFGNIKALSS (111 aa)). The tract at residues 577–605 (AKSNENTTESVTPQVTNEQHTRYDDVSSS) is disordered. The span at 580-594 (NENTTESVTPQVTNE) shows a compositional bias: polar residues. Ser-626 is modified (phosphoserine). A PXIXIT-like, required for interaction with CNA1 and CNA2, and calcineurin-dependent dephosphorylation motif is present at residues 640–645 (PEFYIE). 2 positions are modified to phosphoserine: Ser-649 and Ser-653.

As to quaternary structure, heterodimer of SLM1-SLM2. Binds phosphatidylinositol 4,5-bisphosphate, which is required for function. Interacts with the TORC2 subunits AVO2, BIT61 and TOR2. Interacts with the calcineurin catalytic subunits CNA1 and CNA2.

The protein resides in the cell membrane. Functionally, together with SLM1, effector of the TORC2- and calcineurin-signaling pathways. Phosphorylated and activated by TORC2 under favorable growth conditions. Mediates actin polarization via inhibition of calcineurin-dependent transcription. Upon nutrient limitation or environmental stress, gets dephosphorylated by calcineurin, inhibiting interaction with TORC2, thereby antagonizing TORC2 signaling and mediating calcineurin-dependent actin depolarization. Also functions in heat-induced, calcineurin-mediated uracil permease (FUR4) endocytosis. The sequence is that of Phosphatidylinositol 4,5-bisphosphate-binding protein SLM2 (SLM2) from Saccharomyces cerevisiae (strain ATCC 204508 / S288c) (Baker's yeast).